The sequence spans 182 residues: Crossover junction endodeoxyribonuclease RuvC (182 aa).

Catalysis depends on residues D7, E67, and D139. Mg(2+) contacts are provided by D7, E67, and D139.

This sequence belongs to the RuvC family. As to quaternary structure, homodimer which binds Holliday junction (HJ) DNA. The HJ becomes 2-fold symmetrical on binding to RuvC with unstacked arms; it has a different conformation from HJ DNA in complex with RuvA. In the full resolvosome a probable DNA-RuvA(4)-RuvB(12)-RuvC(2) complex forms which resolves the HJ. Mg(2+) serves as cofactor.

The protein localises to the cytoplasm. The enzyme catalyses Endonucleolytic cleavage at a junction such as a reciprocal single-stranded crossover between two homologous DNA duplexes (Holliday junction).. Its function is as follows. The RuvA-RuvB-RuvC complex processes Holliday junction (HJ) DNA during genetic recombination and DNA repair. Endonuclease that resolves HJ intermediates. Cleaves cruciform DNA by making single-stranded nicks across the HJ at symmetrical positions within the homologous arms, yielding a 5'-phosphate and a 3'-hydroxyl group; requires a central core of homology in the junction. The consensus cleavage sequence is 5'-(A/T)TT(C/G)-3'. Cleavage occurs on the 3'-side of the TT dinucleotide at the point of strand exchange. HJ branch migration catalyzed by RuvA-RuvB allows RuvC to scan DNA until it finds its consensus sequence, where it cleaves and resolves the cruciform DNA. This chain is Crossover junction endodeoxyribonuclease RuvC, found in Bordetella petrii (strain ATCC BAA-461 / DSM 12804 / CCUG 43448).